Reading from the N-terminus, the 137-residue chain is BolA-like protein 1 (137 aa).

Ser81 carries the post-translational modification Phosphoserine. Residues Trp114–Pro137 are disordered.

The protein belongs to the BolA/IbaG family. As to quaternary structure, interacts with GLRX5. As to expression, widely expressed.

The protein localises to the mitochondrion. In terms of biological role, acts as a mitochondrial iron-sulfur (Fe-S) cluster assembly factor that facilitates (Fe-S) cluster insertion into a subset of mitochondrial proteins. Probably acts together with the monothiol glutaredoxin GLRX5. May protect cells against oxidative stress. The polypeptide is BolA-like protein 1 (Homo sapiens (Human)).